The following is a 434-amino-acid chain: ATP-dependent protease ATPase subunit HslU (434 aa).

Residues Val-18, 60 to 65 (GVGKTE), Asp-247, Glu-312, and Arg-384 each bind ATP.

This sequence belongs to the ClpX chaperone family. HslU subfamily. In terms of assembly, a double ring-shaped homohexamer of HslV is capped on each side by a ring-shaped HslU homohexamer. The assembly of the HslU/HslV complex is dependent on binding of ATP.

The protein localises to the cytoplasm. ATPase subunit of a proteasome-like degradation complex; this subunit has chaperone activity. The binding of ATP and its subsequent hydrolysis by HslU are essential for unfolding of protein substrates subsequently hydrolyzed by HslV. HslU recognizes the N-terminal part of its protein substrates and unfolds these before they are guided to HslV for hydrolysis. This chain is ATP-dependent protease ATPase subunit HslU, found in Hyphomonas neptunium (strain ATCC 15444).